Consider the following 348-residue polypeptide: MTDQTAASPRVLVTGGAGYIGSHVLHALTDAGIPAVTIDDLSAGRREAIPAAVPLVEGDIGSAELLDRVMRDHRVDAVMHFAGSIVVPESVVKPLDYYRNNTANSLTLLGACLRAGIDKVVFSSTAAVYGAPESVPIREDAPTVPINPYGASKLMTEQMLRDAGAAHGLRSVILRYFNVAGADPAGRTGQATPVATHLIKVACQALLGRRPPLAIFGTDYDTPDGTCIRDYIHVSDLADAHVLALLHLRRGGGSLLMNCGYGRGASVREVVRTLEEVSGEQVPATFADRRPGDPPQLVAGADRIREQLGWVPKHDRLDGIVRSALSWERSLEQSVGQAGAPGGSASRS.

Thr-125 contacts substrate. The active-site Proton acceptor is Tyr-149.

Belongs to the NAD(P)-dependent epimerase/dehydratase family. It depends on NAD(+) as a cofactor.

The enzyme catalyses UDP-alpha-D-glucose = UDP-alpha-D-galactose. It functions in the pathway carbohydrate metabolism; galactose metabolism. The protein operates within glycan metabolism; exopolysaccharide biosynthesis. The polypeptide is UDP-glucose 4-epimerase (exoB) (Azospirillum brasilense).